The chain runs to 484 residues: Adenylosuccinate synthetase, chloroplastic (484 aa).

The transit peptide at 1–44 directs the protein to the chloroplast; it reads MSLSTLSHPAAAAAGSGKSLFPAGPAAQSVHFPKARLPVPAAVS. GTP is bound by residues 71-77 and 99-101; these read GDEGKGK and GHT. Asp-72 serves as the catalytic Proton acceptor. Mg(2+) is bound by residues Asp-72 and Gly-99. IMP-binding positions include 72-75, 97-100, Thr-189, Arg-203, Gln-283, Thr-298, and Arg-362; these read DEGK and NAGH. The active-site Proton donor is His-100. A substrate-binding site is contributed by 358–364; the sequence is TTTGRPR. GTP is bound by residues Arg-364, 390–392, and 473–475; these read KLD and GVG.

This sequence belongs to the adenylosuccinate synthetase family. Homodimer. Requires Mg(2+) as cofactor.

The protein resides in the plastid. The protein localises to the chloroplast. It catalyses the reaction IMP + L-aspartate + GTP = N(6)-(1,2-dicarboxyethyl)-AMP + GDP + phosphate + 2 H(+). It functions in the pathway purine metabolism; AMP biosynthesis via de novo pathway; AMP from IMP: step 1/2. Functionally, plays an important role in the de novo pathway and in the salvage pathway of purine nucleotide biosynthesis. Catalyzes the first committed step in the biosynthesis of AMP from IMP. The sequence is that of Adenylosuccinate synthetase, chloroplastic from Zea mays (Maize).